The sequence spans 210 residues: Thiamine-phosphate synthase (210 aa).

4-amino-2-methyl-5-(diphosphooxymethyl)pyrimidine contacts are provided by residues 39 to 43 (QLREK) and Asn71. Residues Asp72 and Asp91 each coordinate Mg(2+). Ser110 provides a ligand contact to 4-amino-2-methyl-5-(diphosphooxymethyl)pyrimidine. 134-136 (TPT) contacts 2-[(2R,5Z)-2-carboxy-4-methylthiazol-5(2H)-ylidene]ethyl phosphate. Lys137 provides a ligand contact to 4-amino-2-methyl-5-(diphosphooxymethyl)pyrimidine. Gly163 is a 2-[(2R,5Z)-2-carboxy-4-methylthiazol-5(2H)-ylidene]ethyl phosphate binding site.

Belongs to the thiamine-phosphate synthase family. Mg(2+) serves as cofactor.

The enzyme catalyses 2-[(2R,5Z)-2-carboxy-4-methylthiazol-5(2H)-ylidene]ethyl phosphate + 4-amino-2-methyl-5-(diphosphooxymethyl)pyrimidine + 2 H(+) = thiamine phosphate + CO2 + diphosphate. It carries out the reaction 2-(2-carboxy-4-methylthiazol-5-yl)ethyl phosphate + 4-amino-2-methyl-5-(diphosphooxymethyl)pyrimidine + 2 H(+) = thiamine phosphate + CO2 + diphosphate. It catalyses the reaction 4-methyl-5-(2-phosphooxyethyl)-thiazole + 4-amino-2-methyl-5-(diphosphooxymethyl)pyrimidine + H(+) = thiamine phosphate + diphosphate. It participates in cofactor biosynthesis; thiamine diphosphate biosynthesis; thiamine phosphate from 4-amino-2-methyl-5-diphosphomethylpyrimidine and 4-methyl-5-(2-phosphoethyl)-thiazole: step 1/1. In terms of biological role, condenses 4-methyl-5-(beta-hydroxyethyl)thiazole monophosphate (THZ-P) and 2-methyl-4-amino-5-hydroxymethyl pyrimidine pyrophosphate (HMP-PP) to form thiamine monophosphate (TMP). The sequence is that of Thiamine-phosphate synthase from Campylobacter jejuni subsp. jejuni serotype O:6 (strain 81116 / NCTC 11828).